The following is a 398-amino-acid chain: Probable aminomethyltransferase (398 aa).

This sequence belongs to the GcvT family. In terms of assembly, the glycine cleavage system is composed of four proteins: P, T, L and H.

The catalysed reaction is N(6)-[(R)-S(8)-aminomethyldihydrolipoyl]-L-lysyl-[protein] + (6S)-5,6,7,8-tetrahydrofolate = N(6)-[(R)-dihydrolipoyl]-L-lysyl-[protein] + (6R)-5,10-methylene-5,6,7,8-tetrahydrofolate + NH4(+). The glycine cleavage system catalyzes the degradation of glycine. In Pyrococcus horikoshii (strain ATCC 700860 / DSM 12428 / JCM 9974 / NBRC 100139 / OT-3), this protein is Probable aminomethyltransferase.